The sequence spans 31 residues: Cytochrome b6-f complex subunit 6 (31 aa).

The chain crosses the membrane as a helical span at residues 4 to 24 (VISYFGFLLVALAFTLVTYLG).

The protein belongs to the PetL family. The 4 large subunits of the cytochrome b6-f complex are cytochrome b6, subunit IV (17 kDa polypeptide, PetD), cytochrome f and the Rieske protein, while the 4 small subunits are PetG, PetL, PetM and PetN. The complex functions as a dimer.

It localises to the plastid. Its subcellular location is the chloroplast thylakoid membrane. Its function is as follows. Component of the cytochrome b6-f complex, which mediates electron transfer between photosystem II (PSII) and photosystem I (PSI), cyclic electron flow around PSI, and state transitions. PetL is important for photoautotrophic growth as well as for electron transfer efficiency and stability of the cytochrome b6-f complex. This is Cytochrome b6-f complex subunit 6 from Nephroselmis olivacea (Green alga).